The following is a 473-amino-acid chain: 3-isopropylmalate dehydratase large subunit (473 aa).

C348, C408, and C411 together coordinate [4Fe-4S] cluster.

This sequence belongs to the aconitase/IPM isomerase family. LeuC type 1 subfamily. As to quaternary structure, heterodimer of LeuC and LeuD. [4Fe-4S] cluster is required as a cofactor.

The enzyme catalyses (2R,3S)-3-isopropylmalate = (2S)-2-isopropylmalate. It functions in the pathway amino-acid biosynthesis; L-leucine biosynthesis; L-leucine from 3-methyl-2-oxobutanoate: step 2/4. Catalyzes the isomerization between 2-isopropylmalate and 3-isopropylmalate, via the formation of 2-isopropylmaleate. The protein is 3-isopropylmalate dehydratase large subunit of Haloarcula marismortui (strain ATCC 43049 / DSM 3752 / JCM 8966 / VKM B-1809) (Halobacterium marismortui).